A 565-amino-acid polypeptide reads, in one-letter code: DNA primase (565 aa).

The CHC2-type zinc-finger motif lies at 37 to 61 (CPFHSETNPSFYVHPGLKIYHCFGC). Residues 248-329 (GFFVITEGYF…NVLVATPSPY (82 aa)) form the Toprim domain. Glu254, Asp298, and Asp300 together coordinate Mg(2+).

The protein belongs to the DnaG primase family. In terms of assembly, monomer. Interacts with DnaB. Requires Zn(2+) as cofactor. Mg(2+) serves as cofactor.

It catalyses the reaction ssDNA + n NTP = ssDNA/pppN(pN)n-1 hybrid + (n-1) diphosphate.. Its function is as follows. RNA polymerase that catalyzes the synthesis of short RNA molecules used as primers for DNA polymerase during DNA replication. This Thermotoga maritima (strain ATCC 43589 / DSM 3109 / JCM 10099 / NBRC 100826 / MSB8) protein is DNA primase.